We begin with the raw amino-acid sequence, 2220 residues long: Calcineurin-binding protein cabin-1 (2220 aa).

2 positions are modified to phosphoserine: S10 and S11. T12 carries the phosphothreonine modification. Residues S20 and S66 each carry the phosphoserine modification. 3 TPR repeats span residues 36–69, 90–123, and 125–157; these read AFALYHKALDLQKHDRFEESAKAYHELLEASLLR, YSTYKNLAQLAAQREDLETAMEFYLEAVMLDSTD, and NLWYKIGHVALRLIRIPLARHAFEEGLRCNPDH. The interval 361–400 is disordered; it reads GAPVGDISGGDKSKKGVKRKKISEESGETAKRRSARVRNT. Residues 382–391 show a composition bias toward basic and acidic residues; that stretch reads ISEESGETAK. Residues S433 and S450 each carry the phosphoserine modification. The stretch at 615–648 is one TPR 4 repeat; that stretch reads VRVYWLKARFLALQGDMEQALENYDICTEMLQSS. The residue at position 673 (S673) is a Phosphoserine. TPR repeat units follow at residues 1055 to 1088 and 1106 to 1139; these read NELYYLLADYHFKNKEQSKAIKFYMHDICICPNR and KLNSNELKSDGPIWKHATPVLNCFRRALEIDSSN. Disordered regions lie at residues 1299-1476, 1668-1845, 1916-2165, and 2197-2220; these read FARG…STPT, AEGS…RLSR, AQRQ…GSIS, and VLETSSQESSLESETDEDDDYMDI. The segment covering 1301-1324 has biased composition (basic and acidic residues); that stretch reads RGEEKNTPKASEKEKACLVDEDSH. The segment covering 1327-1349 has biased composition (low complexity); the sequence is AGTLPGPGASLPSSSGPGLTSPP. A compositionally biased stretch (polar residues) spans 1377-1397; sequence DSTAVALSDSSSTQDFFNEPT. A compositionally biased stretch (basic and acidic residues) spans 1402 to 1412; the sequence is GSRKSYTEKRL. At S1439 the chain carries Phosphoserine. Residues 1715 to 1725 show a composition bias toward gly residues; the sequence is SGPGPEPGGKV. Composition is skewed to basic and acidic residues over residues 1744–1753 and 1784–1794; these read SGERKDKESP and PARDRGPESRP. The span at 1812-1823 shows a compositional bias: pro residues; it reads PLTPAQPAPAPA. Polar residues-rich tracts occupy residues 1918 to 1927 and 1975 to 1989; these read RQASGDTPTT and TIITCPPSASASTLD. Position 1924 is a phosphothreonine (T1924). Positions 2070 to 2081 are enriched in basic and acidic residues; the sequence is GKLRPEPRRDGE. Residues 2091–2112 are compositionally biased toward low complexity; the sequence is PLSSPPTAASSKAPSSGSAQPP. At S2094 the chain carries Phosphoserine. The interval 2116-2153 is required for interaction with calcineurin; the sequence is PGKPEPSRAKSRPLPNMPKLVIPSAATKFPPEITVTPP. 2 positions are modified to phosphothreonine: T2151 and T2154. The segment covering 2207-2220 has biased composition (acidic residues); the sequence is LESETDEDDDYMDI.

Component of a complex that includes at least ASF1A, CABIN1, HIRA, histone H3.3 and UBN1. Interacts with calcineurin. Interacts with MEF2B. In terms of processing, activated through PKC-mediated hyperphosphorylation. Phosphorylation by the DNA damage kinases ATM and CHK2 enhances ubiquitination. Upon genotoxic stress, ubiquitination by the DCX(DDB2) E3 ubiquitin-protein ligase complex targets CABIN1 for proteasomal degradation, leading to the release of p53/TP53. As to expression, widely expressed in different tissues.

It localises to the nucleus. Its function is as follows. May be required for replication-independent chromatin assembly. May serve as a negative regulator of T-cell receptor (TCR) signaling via inhibition of calcineurin. Inhibition of activated calcineurin is dependent on both PKC and calcium signals. Acts as a negative regulator of p53/TP53 by keeping p53 in an inactive state on chromatin at promoters of a subset of it's target genes. This Homo sapiens (Human) protein is Calcineurin-binding protein cabin-1 (CABIN1).